The chain runs to 214 residues: Cytolysin tenebrosin-B (214 aa).

Residues Met-1 to Ala-19 form the signal peptide. The propeptide occupies Leu-20–Arg-35. The plays an important role in the hemolytic activity stretch occupies residues Ala-38–Ala-47. The interval Gly-46 to Ser-65 is N-terminal region. Residues Ser-89, Val-122, Ser-140, Pro-142, Tyr-168, Tyr-172, and Tyr-173 each coordinate phosphocholine. A trp-rich region, which is important for the binding to lipid membrane region spans residues Ser-140 to Lys-155. Residues Arg-179–Asp-181 carry the Cell attachment site, crucial for protein stability motif.

Belongs to the actinoporin family. Sea anemone subfamily. As to quaternary structure, octamer or nonamer in membranes. Monomer in the soluble state.

Its subcellular location is the secreted. It localises to the nematocyst. The protein resides in the target cell membrane. Its function is as follows. Pore-forming protein that forms cations-selective hydrophilic pores of around 1 nm and causes cardiac stimulation and cytolysis. Pore formation is a multi-step process that involves specific recognition of membrane sphingomyelin (but neither cholesterol nor phosphatidylcholine) using aromatic rich region and adjacent phosphocholine (POC) binding site, firm binding to the membrane (mainly driven by hydrophobic interactions) accompanied by the transfer of the N-terminal region to the lipid-water interface and finally pore formation after oligomerization of monomers. The chain is Cytolysin tenebrosin-B from Actinia tenebrosa (Australian red waratah sea anemone).